We begin with the raw amino-acid sequence, 138 residues long: Large-conductance mechanosensitive channel (138 aa).

The next 3 membrane-spanning stretches (helical) occupy residues 15–35 (VDLAIGVIIGGAFGGLVNSIV), 38–58 (IIMPIIGLITGGIDFSNMFIQ), and 80–100 (GNFITLLINFMIIAWVLFLVV).

This sequence belongs to the MscL family. As to quaternary structure, homopentamer.

The protein localises to the cell inner membrane. Channel that opens in response to stretch forces in the membrane lipid bilayer. May participate in the regulation of osmotic pressure changes within the cell. This chain is Large-conductance mechanosensitive channel, found in Brucella ovis (strain ATCC 25840 / 63/290 / NCTC 10512).